A 449-amino-acid chain; its full sequence is Zinc finger and BTB domain-containing protein 14 (449 aa).

The 67-residue stretch at cysteine 36–lysine 102 folds into the BTB domain. Residue lysine 46 forms a Glycyl lysine isopeptide (Lys-Gly) (interchain with G-Cter in SUMO2) linkage. The Nuclear localization signal signature appears at histidine 50 to lysine 66. The tract at residues glycine 153–threonine 194 is disordered. The segment covering aspartate 157 to valine 178 has biased composition (acidic residues). Glycyl lysine isopeptide (Lys-Gly) (interchain with G-Cter in SUMO2) cross-links involve residues lysine 203 and lysine 249. C2H2-type zinc fingers lie at residues isoleucine 277–proline 304, phenylalanine 305–proline 332, tyrosine 333–proline 360, phenylalanine 361–proline 388, and phenylalanine 389–glutamine 417.

The protein belongs to the krueppel C2H2-type zinc-finger protein family. In terms of assembly, interacts with ZBTB21.

The protein localises to the nucleus. Transcriptional activator of the dopamine transporter (DAT), binding it's promoter at the consensus sequence 5'-CCTGCACAGTTCACGGA-3'. Binds to 5'-d(GCC)(n)-3' trinucleotide repeats in promoter regions and acts as a repressor of the FMR1 gene. Transcriptional repressor of MYC and thymidine kinase promoters. In Homo sapiens (Human), this protein is Zinc finger and BTB domain-containing protein 14 (ZBTB14).